The following is a 292-amino-acid chain: Complex I assembly factor TIMMDC1, mitochondrial (292 aa).

2 helical membrane-spanning segments follow: residues 146-168 and 195-215; these read WSWR…TVYR and GLLS…VLIL.

Belongs to the Tim17/Tim22/Tim23 family. Associates with the intermediate 315 kDa subcomplex of incompletely assembled complex I.

Its subcellular location is the mitochondrion membrane. In terms of biological role, chaperone protein involved in the assembly of the mitochondrial NADH:ubiquinone oxidoreductase complex (complex I). Participates in constructing the membrane arm of complex I. The protein is Complex I assembly factor TIMMDC1, mitochondrial (timmdc1) of Danio rerio (Zebrafish).